The chain runs to 471 residues: ATP synthase subunit beta (471 aa).

154–161 (GGAGVGKT) is an ATP binding site.

The protein belongs to the ATPase alpha/beta chains family. F-type ATPases have 2 components, CF(1) - the catalytic core - and CF(0) - the membrane proton channel. CF(1) has five subunits: alpha(3), beta(3), gamma(1), delta(1), epsilon(1). CF(0) has three main subunits: a(1), b(2) and c(9-12). The alpha and beta chains form an alternating ring which encloses part of the gamma chain. CF(1) is attached to CF(0) by a central stalk formed by the gamma and epsilon chains, while a peripheral stalk is formed by the delta and b chains.

Its subcellular location is the cell membrane. It catalyses the reaction ATP + H2O + 4 H(+)(in) = ADP + phosphate + 5 H(+)(out). Its function is as follows. Produces ATP from ADP in the presence of a proton gradient across the membrane. The catalytic sites are hosted primarily by the beta subunits. The chain is ATP synthase subunit beta from Mesomycoplasma hyopneumoniae (strain 7448) (Mycoplasma hyopneumoniae).